Consider the following 186-residue polypeptide: Ribosome maturation factor RimM (186 aa).

A PRC barrel domain is found at 93-168 (EDDFYLVDLI…VLIDPPQEEN (76 aa)). A disordered region spans residues 163-186 (PPQEENAPEFGRNELGHDDGGEAA). Basic and acidic residues predominate over residues 173-186 (GRNELGHDDGGEAA).

This sequence belongs to the RimM family. As to quaternary structure, binds ribosomal protein uS19.

Its subcellular location is the cytoplasm. An accessory protein needed during the final step in the assembly of 30S ribosomal subunit, possibly for assembly of the head region. Essential for efficient processing of 16S rRNA. May be needed both before and after RbfA during the maturation of 16S rRNA. It has affinity for free ribosomal 30S subunits but not for 70S ribosomes. The sequence is that of Ribosome maturation factor RimM from Granulibacter bethesdensis (strain ATCC BAA-1260 / CGDNIH1).